Consider the following 171-residue polypeptide: Adenine phosphoribosyltransferase (171 aa).

The protein belongs to the purine/pyrimidine phosphoribosyltransferase family. In terms of assembly, homodimer.

Its subcellular location is the cytoplasm. The enzyme catalyses AMP + diphosphate = 5-phospho-alpha-D-ribose 1-diphosphate + adenine. Its pathway is purine metabolism; AMP biosynthesis via salvage pathway; AMP from adenine: step 1/1. Functionally, catalyzes a salvage reaction resulting in the formation of AMP, that is energically less costly than de novo synthesis. This chain is Adenine phosphoribosyltransferase, found in Prochlorococcus marinus (strain MIT 9515).